A 300-amino-acid chain; its full sequence is MNDALADSGLVIVDKPQGMTSHDVVSKIRRTFSTKKVGHAGTLDPMATGVLVLGLERGTKFLAHMVASTKSYTATIRLGAATTTDDREGETITSASPDQLAGITETKISDAVKQFRGSIMQRPAAVSAIKIDGKRAHQRVREGEKVEIPARPVTISRYDILEIRRDAAFIDIDVEVDCSSGTYIRSLARDLGEELGVGGHLTALRRTQVGPFTLDNAVTLEKLEENPHVSLTLDQALAASYPVLSVSEKEASDLAMGKWLTPRGLKGIHAAVDPHGRAIALVKEQGKRLATIFVARPSTL.

Residue aspartate 44 is the Nucleophile of the active site.

It belongs to the pseudouridine synthase TruB family. Type 1 subfamily.

The enzyme catalyses uridine(55) in tRNA = pseudouridine(55) in tRNA. Its function is as follows. Responsible for synthesis of pseudouridine from uracil-55 in the psi GC loop of transfer RNAs. The polypeptide is tRNA pseudouridine synthase B (Corynebacterium diphtheriae (strain ATCC 700971 / NCTC 13129 / Biotype gravis)).